The chain runs to 249 residues: Ribosomal RNA small subunit methyltransferase J (249 aa).

S-adenosyl-L-methionine contacts are provided by residues 99–100 (RD), 115–116 (ER), 151–152 (SS), and Asp169.

Belongs to the methyltransferase superfamily. RsmJ family.

Its subcellular location is the cytoplasm. It catalyses the reaction guanosine(1516) in 16S rRNA + S-adenosyl-L-methionine = N(2)-methylguanosine(1516) in 16S rRNA + S-adenosyl-L-homocysteine + H(+). In terms of biological role, specifically methylates the guanosine in position 1516 of 16S rRNA. The polypeptide is Ribosomal RNA small subunit methyltransferase J (Shewanella oneidensis (strain ATCC 700550 / JCM 31522 / CIP 106686 / LMG 19005 / NCIMB 14063 / MR-1)).